Here is a 432-residue protein sequence, read N- to C-terminus: Negative regulator of systemic acquired resistance SNI1 (432 aa).

Interacts with SSN2. Binds to NTL9/CBNAC to promote its binding to promoters of target genes. Component of the SMC5-SMC6 complex which consists at least of SMC5 and SMC6B. Interacts with RAD17. As to expression, expressed at low levels in the veins.

It is found in the nucleus. In terms of biological role, component of the SMC5-SMC6 complex, a complex involved in repair of DNA double-strand breaks by homologous recombination. Transcription repressor that prevents expression of pathogenesis-related genes (PR) via histone modifications and binding negative cis-acting elements at their promoters. Negative regulator of hypersensitive response (HR) and systemic acquired resistance (SAR) required to dampen the basal expression of pathogenesis related (PR) genes. Functions synergistically with NTL9/CBNAC as negative regulator of pathogen-induced PR1 expression and basal resistance to a virulent strain of P.syringae. Binds to the PR1 gene promoter to suppress defense response in the absence of pathogen challenge and is removed in response to induction. Negatively regulates both gene expression and DNA recombination during pathogen infection, thus being involved in short-term defense response and a long-term survival strategy. Prevents effective immune responses that involve activation of DNA damage responses, probably by negatively regulating the DNA damage sensors RAD17 and ATR. Negative regulator of defenses against the beet cyst nematode H.schachtii. The chain is Negative regulator of systemic acquired resistance SNI1 from Arabidopsis thaliana (Mouse-ear cress).